Reading from the N-terminus, the 259-residue chain is Imidazole glycerol phosphate synthase subunit HisF (259 aa).

Residues aspartate 11 and aspartate 130 contribute to the active site.

The protein belongs to the HisA/HisF family. Heterodimer of HisH and HisF.

It localises to the cytoplasm. It carries out the reaction 5-[(5-phospho-1-deoxy-D-ribulos-1-ylimino)methylamino]-1-(5-phospho-beta-D-ribosyl)imidazole-4-carboxamide + L-glutamine = D-erythro-1-(imidazol-4-yl)glycerol 3-phosphate + 5-amino-1-(5-phospho-beta-D-ribosyl)imidazole-4-carboxamide + L-glutamate + H(+). Its pathway is amino-acid biosynthesis; L-histidine biosynthesis; L-histidine from 5-phospho-alpha-D-ribose 1-diphosphate: step 5/9. In terms of biological role, IGPS catalyzes the conversion of PRFAR and glutamine to IGP, AICAR and glutamate. The HisF subunit catalyzes the cyclization activity that produces IGP and AICAR from PRFAR using the ammonia provided by the HisH subunit. This is Imidazole glycerol phosphate synthase subunit HisF from Chloroflexus aurantiacus (strain ATCC 29366 / DSM 635 / J-10-fl).